The chain runs to 441 residues: Protein translocase subunit SecY (441 aa).

Helical transmembrane passes span 24-44, 77-97, 123-143, 152-172, 181-201, 215-235, 272-292, 313-333, 373-393, and 397-417; these read LFVL…VPGI, ILAL…LLAT, ATVV…PNML, FSFY…LMWL, IGNG…PSAI, PLVL…VVFV, VMPA…TQWF, PLYL…YTAM, LIGG…TSAW, and FYFG…FIVQ.

Belongs to the SecY/SEC61-alpha family. In terms of assembly, component of the Sec protein translocase complex. Heterotrimer consisting of SecY, SecE and SecG subunits. The heterotrimers can form oligomers, although 1 heterotrimer is thought to be able to translocate proteins. Interacts with the ribosome. Interacts with SecDF, and other proteins may be involved. Interacts with SecA.

It is found in the cell inner membrane. Functionally, the central subunit of the protein translocation channel SecYEG. Consists of two halves formed by TMs 1-5 and 6-10. These two domains form a lateral gate at the front which open onto the bilayer between TMs 2 and 7, and are clamped together by SecE at the back. The channel is closed by both a pore ring composed of hydrophobic SecY resides and a short helix (helix 2A) on the extracellular side of the membrane which forms a plug. The plug probably moves laterally to allow the channel to open. The ring and the pore may move independently. The sequence is that of Protein translocase subunit SecY from Haemophilus influenzae (strain ATCC 51907 / DSM 11121 / KW20 / Rd).